The following is a 226-amino-acid chain: Protein BASIC PENTACYSTEINE7 (226 aa).

Residues 42-116 (IDLSQEPPAE…PSIPETKREK (75 aa)) are disordered. The span at 66-76 (RDSRNDTETVK) shows a compositional bias: basic and acidic residues. The segment covering 88–105 (LKPKPQRKKRSVSNKSKK) has biased composition (basic residues).

Belongs to the BBR/BPC family. Expressed in seedlings, leaves and pistils. Detected in anthers, in pollen grains, in young rosette, in leaf vasculature, in the lateral and primary roots, in embryo sac, and in the whole ovule.

The protein localises to the nucleus. Its function is as follows. Transcriptional regulator that specifically binds to GA-rich elements (GAGA-repeats) present in regulatory sequences of genes involved in developmental processes. This is Protein BASIC PENTACYSTEINE7 (BPC7) from Arabidopsis thaliana (Mouse-ear cress).